Here is a 119-residue protein sequence, read N- to C-terminus: MSGGVQEQFEIKFRLPDGTDIGPKRYPAASTVATLKESIVAQWPKDKEKGPRTVNDLKLINAGKILENNKTLSECKSPICDFSGLTTMHVVVRAPTSDKQSNKIVAKKPKDFRCGCSIM.

Positions 9 to 75 constitute a Ubiquitin-like domain; sequence FEIKFRLPDG…LENNKTLSEC (67 aa). Residue cysteine 116 is modified to Cysteine methyl ester. Cysteine 116 carries S-farnesyl cysteine lipidation. The propeptide at 117-119 is removed in mature form; the sequence is SIM.

The protein resides in the cell membrane. May serve as docking site to facilitate the association of other proteins to the plasma membrane. The protein is Membrane-anchored ubiquitin-fold protein 1 (MUB1) of Oryza sativa subsp. japonica (Rice).